Here is a 123-residue protein sequence, read N- to C-terminus: Small ribosomal subunit protein uS12 (123 aa).

The interval 9–32 (ANPREVQKSRKKVPALQQSPQKRG) is disordered. Aspartate 89 is modified (3-methylthioaspartic acid).

The protein belongs to the universal ribosomal protein uS12 family. Part of the 30S ribosomal subunit. Contacts proteins S8 and S17. May interact with IF1 in the 30S initiation complex.

Functionally, with S4 and S5 plays an important role in translational accuracy. In terms of biological role, interacts with and stabilizes bases of the 16S rRNA that are involved in tRNA selection in the A site and with the mRNA backbone. Located at the interface of the 30S and 50S subunits, it traverses the body of the 30S subunit contacting proteins on the other side and probably holding the rRNA structure together. The combined cluster of proteins S8, S12 and S17 appears to hold together the shoulder and platform of the 30S subunit. The sequence is that of Small ribosomal subunit protein uS12 from Bradyrhizobium sp. (strain BTAi1 / ATCC BAA-1182).